A 129-amino-acid chain; its full sequence is Small ribosomal subunit protein uS8 (129 aa).

It belongs to the universal ribosomal protein uS8 family. Part of the 30S ribosomal subunit.

In terms of biological role, one of the primary rRNA binding proteins, it binds directly to 16S rRNA central domain where it helps coordinate assembly of the platform of the 30S subunit. This is Small ribosomal subunit protein uS8 from Thermoplasma volcanium (strain ATCC 51530 / DSM 4299 / JCM 9571 / NBRC 15438 / GSS1).